A 223-amino-acid polypeptide reads, in one-letter code: MAQVTLYNIKGEKIGNIEIADEVFNVEPNLDVMWRYIDMQLTNSRAGTASTKTRGEVAGGGRKPWPQKHTGRARQGSIRAIHWRHGGVAHGPKPRNYLKRLNKKMKKLALKSALSARFQEGNLIVVSDIRFEKAQTKQMREVLKNLGIADEKVLFVLPRKEEVYENVKLSGRNIPGVKVIIADNPNNGNPVNIDGLNVYDIINSSKVVLTEGTVRKIEEVLSK.

Residues 47-72 (GTASTKTRGEVAGGGRKPWPQKHTGR) are disordered.

It belongs to the universal ribosomal protein uL4 family. As to quaternary structure, part of the 50S ribosomal subunit.

Functionally, one of the primary rRNA binding proteins, this protein initially binds near the 5'-end of the 23S rRNA. It is important during the early stages of 50S assembly. It makes multiple contacts with different domains of the 23S rRNA in the assembled 50S subunit and ribosome. Forms part of the polypeptide exit tunnel. In Fervidobacterium nodosum (strain ATCC 35602 / DSM 5306 / Rt17-B1), this protein is Large ribosomal subunit protein uL4.